Reading from the N-terminus, the 232-residue chain is Orotate phosphoribosyltransferase (232 aa).

5-phospho-alpha-D-ribose 1-diphosphate is bound by residues arginine 107, lysine 108, lysine 111, and 133–141; that span reads EDLTTDGGS. Orotate is bound at residue threonine 137.

The protein belongs to the purine/pyrimidine phosphoribosyltransferase family. PyrE subfamily. Homodimer. Requires Mg(2+) as cofactor.

The catalysed reaction is orotidine 5'-phosphate + diphosphate = orotate + 5-phospho-alpha-D-ribose 1-diphosphate. The protein operates within pyrimidine metabolism; UMP biosynthesis via de novo pathway; UMP from orotate: step 1/2. Catalyzes the transfer of a ribosyl phosphate group from 5-phosphoribose 1-diphosphate to orotate, leading to the formation of orotidine monophosphate (OMP). In Cereibacter sphaeroides (strain ATCC 17029 / ATH 2.4.9) (Rhodobacter sphaeroides), this protein is Orotate phosphoribosyltransferase.